Reading from the N-terminus, the 205-residue chain is Cytochrome c biogenesis ATP-binding export protein CcmA 2 (205 aa).

Residues 2–205 form the ABC transporter domain; sequence LEARDLHCER…LALTGGEAGL (204 aa). 34-41 contacts ATP; it reads GGNGAGKT.

This sequence belongs to the ABC transporter superfamily. CcmA exporter (TC 3.A.1.107) family. The complex is composed of two ATP-binding proteins (CcmA) and two transmembrane proteins (CcmB).

Its subcellular location is the cell inner membrane. The enzyme catalyses heme b(in) + ATP + H2O = heme b(out) + ADP + phosphate + H(+). In terms of biological role, part of the ABC transporter complex CcmAB involved in the biogenesis of c-type cytochromes; once thought to export heme, this seems not to be the case, but its exact role is uncertain. Responsible for energy coupling to the transport system. This is Cytochrome c biogenesis ATP-binding export protein CcmA 2 from Salmonella paratyphi A (strain ATCC 9150 / SARB42).